Here is an 863-residue protein sequence, read N- to C-terminus: Leucine--tRNA ligase (863 aa).

A 'HIGH' region motif is present at residues 40–51 (PYPSGAGLHVGH). Positions 635 to 639 (KMSKS) match the 'KMSKS' region motif. K638 provides a ligand contact to ATP.

Belongs to the class-I aminoacyl-tRNA synthetase family.

The protein resides in the cytoplasm. The enzyme catalyses tRNA(Leu) + L-leucine + ATP = L-leucyl-tRNA(Leu) + AMP + diphosphate. The chain is Leucine--tRNA ligase from Leptospira interrogans serogroup Icterohaemorrhagiae serovar copenhageni (strain Fiocruz L1-130).